A 94-amino-acid polypeptide reads, in one-letter code: Acylphosphatase (94 aa).

One can recognise an Acylphosphatase-like domain in the interval 7-94 (AVRVRISGRV…NMPRDFRITG (88 aa)). Catalysis depends on residues R22 and N40.

It belongs to the acylphosphatase family.

It carries out the reaction an acyl phosphate + H2O = a carboxylate + phosphate + H(+). This is Acylphosphatase (acyP) from Rhizobium etli (strain ATCC 51251 / DSM 11541 / JCM 21823 / NBRC 15573 / CFN 42).